The sequence spans 407 residues: Arginine deiminase (407 aa).

The Amidino-cysteine intermediate role is filled by cysteine 397.

This sequence belongs to the arginine deiminase family.

It localises to the cytoplasm. It catalyses the reaction L-arginine + H2O = L-citrulline + NH4(+). It participates in amino-acid degradation; L-arginine degradation via ADI pathway; carbamoyl phosphate from L-arginine: step 1/2. This is Arginine deiminase from Limosilactobacillus fermentum (strain NBRC 3956 / LMG 18251) (Lactobacillus fermentum).